Consider the following 434-residue polypeptide: UDP-N-acetylglucosamine 1-carboxyvinyltransferase 1 (434 aa).

22–23 (KN) is a binding site for phosphoenolpyruvate. Arginine 93 lines the UDP-N-acetyl-alpha-D-glucosamine pocket. The active-site Proton donor is cysteine 117. Cysteine 117 carries the post-translational modification 2-(S-cysteinyl)pyruvic acid O-phosphothioketal. Residues 122-126 (RPIDQ), aspartate 306, and valine 328 each bind UDP-N-acetyl-alpha-D-glucosamine.

It belongs to the EPSP synthase family. MurA subfamily.

Its subcellular location is the cytoplasm. The enzyme catalyses phosphoenolpyruvate + UDP-N-acetyl-alpha-D-glucosamine = UDP-N-acetyl-3-O-(1-carboxyvinyl)-alpha-D-glucosamine + phosphate. It participates in cell wall biogenesis; peptidoglycan biosynthesis. Functionally, cell wall formation. Adds enolpyruvyl to UDP-N-acetylglucosamine. The sequence is that of UDP-N-acetylglucosamine 1-carboxyvinyltransferase 1 from Bacillus cereus (strain ATCC 14579 / DSM 31 / CCUG 7414 / JCM 2152 / NBRC 15305 / NCIMB 9373 / NCTC 2599 / NRRL B-3711).